The sequence spans 256 residues: Small ribosomal subunit protein eS1B (256 aa).

Ala-2 is modified (N-acetylalanine; partial).

It belongs to the eukaryotic ribosomal protein eS1 family. In terms of assembly, component of the small ribosomal subunit. Mature ribosomes consist of a small (40S) and a large (60S) subunit. The 40S subunit contains about 33 different proteins and 1 molecule of RNA (18S). The 60S subunit contains about 49 different proteins and 3 molecules of RNA (25S, 5.8S and 5S).

The protein localises to the cytoplasm. The sequence is that of Small ribosomal subunit protein eS1B from Clavispora lusitaniae (strain ATCC 42720) (Yeast).